Reading from the N-terminus, the 342-residue chain is Renalase (342 aa).

The N-terminal stretch at 1–17 (MSRVLVVGAGLTGSLCA) is a signal peptide. FAD is bound by residues threonine 12, arginine 42, and 61 to 62 (QY).

Belongs to the renalase family. Requires FAD as cofactor. Expressed predominantly in kidney and testis with lower levels in liver, heart and embryo and weak expression in brain and skeletal muscle.

The protein resides in the secreted. It carries out the reaction 1,2-dihydro-beta-NAD + O2 + H(+) = H2O2 + NAD(+). The catalysed reaction is 1,2-dihydro-beta-NADP + O2 + H(+) = H2O2 + NADP(+). It catalyses the reaction 1,6-dihydro-beta-NADP + O2 + H(+) = H2O2 + NADP(+). The enzyme catalyses 1,6-dihydro-beta-NAD + O2 + H(+) = H2O2 + NAD(+). Functionally, catalyzes the oxidation of the less abundant 1,2-dihydro-beta-NAD(P) and 1,6-dihydro-beta-NAD(P) to form beta-NAD(P)(+). The enzyme hormone is secreted by the kidney, and circulates in blood and modulates cardiac function and systemic blood pressure. Lowers blood pressure in vivo by decreasing cardiac contractility and heart rate and preventing a compensatory increase in peripheral vascular tone, suggesting a causal link to the increased plasma catecholamine and heightened cardiovascular risk. High concentrations of catecholamines activate plasma renalase and promotes its secretion and synthesis. This Mus musculus (Mouse) protein is Renalase.